A 121-amino-acid polypeptide reads, in one-letter code: Large ribosomal subunit protein bL20 (121 aa).

This sequence belongs to the bacterial ribosomal protein bL20 family.

Binds directly to 23S ribosomal RNA and is necessary for the in vitro assembly process of the 50S ribosomal subunit. It is not involved in the protein synthesizing functions of that subunit. In Chlamydia caviae (strain ATCC VR-813 / DSM 19441 / 03DC25 / GPIC) (Chlamydophila caviae), this protein is Large ribosomal subunit protein bL20.